The following is a 181-amino-acid chain: Ribosome-recycling factor (181 aa).

Residues 131–154 (RRDAMDSVKKEKEMPEDDVRKAEN) are disordered.

This sequence belongs to the RRF family.

It is found in the cytoplasm. Its function is as follows. Responsible for the release of ribosomes from messenger RNA at the termination of protein biosynthesis. May increase the efficiency of translation by recycling ribosomes from one round of translation to another. The polypeptide is Ribosome-recycling factor (Leuconostoc citreum (strain KM20)).